The primary structure comprises 154 residues: Endoribonuclease YbeY (154 aa).

Zn(2+) is bound by residues His114, His118, and His124.

It belongs to the endoribonuclease YbeY family. It depends on Zn(2+) as a cofactor.

It localises to the cytoplasm. In terms of biological role, single strand-specific metallo-endoribonuclease involved in late-stage 70S ribosome quality control and in maturation of the 3' terminus of the 16S rRNA. This chain is Endoribonuclease YbeY, found in Aggregatibacter actinomycetemcomitans (Actinobacillus actinomycetemcomitans).